The sequence spans 301 residues: Olfactory receptor 10AG1 (301 aa).

At 1 to 16 (MEFVLLGFSDIPNLHW) the chain is on the extracellular side. The helical transmembrane segment at 17-37 (MLFSIFLLMYLMILMCNGIII) threads the bilayer. Over 38–45 (LLIKIHPA) the chain is Cytoplasmic. A helical membrane pass occupies residues 46-66 (LQTPMYFFLSNFSLLEICYVT). At 67-90 (IIIPRMLMDIWTQKGNISLFACAT) the chain is on the extracellular side. N-linked (GlcNAc...) asparagine glycosylation occurs at Asn82. Cys88 and Cys180 are joined by a disulfide. The chain crosses the membrane as a helical span at residues 91–111 (QMCFFLMLGGTECLLLTVMAY). Over 112–130 (DRYVAICKPLQYPLVMNHK) the chain is Cytoplasmic. The chain crosses the membrane as a helical span at residues 131–151 (VCIQLIIASWTITIPVVIGET). Residues 152–188 (CQIFLLPFCGTNTINHFFCDIPPILKLACGNIFVNEI) lie on the Extracellular side of the membrane. A helical membrane pass occupies residues 189 to 208 (TVHVVAVVFITVPFLLIVVS). Topologically, residues 209–228 (YGKIISNILKLSSARGKAKA) are cytoplasmic. The chain crosses the membrane as a helical span at residues 229–249 (FSTCSSHLIVVILFFGAGTIT). The Extracellular segment spans residues 250 to 262 (YLQPKPHQFQRMG). A helical transmembrane segment spans residues 263–283 (KLISLFYTILIPTLNPIIYTL). At 284–301 (RNKDIMVALRKLLAKLLT) the chain is on the cytoplasmic side.

This sequence belongs to the G-protein coupled receptor 1 family.

It localises to the cell membrane. Functionally, odorant receptor. The sequence is that of Olfactory receptor 10AG1 (OR10AG1) from Homo sapiens (Human).